A 228-amino-acid polypeptide reads, in one-letter code: Interferon-induced transmembrane protein 10 (228 aa).

The Extracellular segment spans residues methionine 1–tyrosine 154. Residues alanine 29–alanine 49 form a disordered region. A helical membrane pass occupies residues leucine 155–alanine 175. Residues cysteine 167 and cysteine 168 are each lipidated (S-palmitoyl cysteine). Residues tyrosine 176–arginine 200 lie on the Cytoplasmic side of the membrane. The chain crosses the membrane as a helical span at residues leucine 201–leucine 221. Residues arginine 222–tyrosine 228 lie on the Extracellular side of the membrane.

The protein belongs to the CD225/Dispanin family.

It localises to the cell membrane. This Homo sapiens (Human) protein is Interferon-induced transmembrane protein 10 (IFITM10).